The chain runs to 131 residues: Guanyl-specific ribonuclease F1 (131 aa).

The signal sequence occupies residues methionine 1–arginine 25. Glutamine 26 is modified (pyrrolidone carboxylic acid). Intrachain disulfides connect cysteine 31/cysteine 127 and cysteine 49/cysteine 108. Histidine 65 is an active-site residue. The active-site Proton acceptor is glutamate 83. Residue histidine 116 is the Proton donor of the active site.

This sequence belongs to the ribonuclease N1/T1 family.

It catalyses the reaction [RNA] containing guanosine + H2O = an [RNA fragment]-3'-guanosine-3'-phosphate + a 5'-hydroxy-ribonucleotide-3'-[RNA fragment].. The sequence is that of Guanyl-specific ribonuclease F1 from Fusarium fujikuroi (Bakanae and foot rot disease fungus).